The chain runs to 353 residues: Colistin resistance protein EmrA (353 aa).

Residues 21-41 (WGVFSVLLLFLVAGILYYFFV) form a helical membrane-spanning segment. Residues 132–204 (VVAAQADLAR…QASRAQLLAD (73 aa)) adopt a coiled-coil conformation.

The protein belongs to the membrane fusion protein (MFP) (TC 8.A.1) family.

It is found in the cell inner membrane. Functionally, probably part of an efflux pump system that contributes to adaptation to osmotic stress and resistance to colistin. This chain is Colistin resistance protein EmrA, found in Acinetobacter baumannii (strain ATCC 17978 / DSM 105126 / CIP 53.77 / LMG 1025 / NCDC KC755 / 5377).